Consider the following 255-residue polypeptide: MRRALIAGNWKLNGTTQAATALATAVRDGVAANKPDCDVLVCPTFTVLSAVQGVVAGSGVDLGAQNMAVASSGAFTGEISGEMLKDVGCSYVILGHSERRTLFGETNEQVAQKVASAYRDGLTPILCVGETLEQREAEQTMQVLEQQLLACLPVLPADAAKQQQLVVAYEPVWAIGTGKVASTAQAQEAHAFIRGLLAKELGANVADAVRILYGGSMKPDNAKELLGQADVDGGLIGGAALKANDFLAIMDGLTA.

N9 to K11 contacts substrate. Residue H96 is the Electrophile of the active site. E170 acts as the Proton acceptor in catalysis. Substrate is bound by residues G176, S216, and G237 to G238.

The protein belongs to the triosephosphate isomerase family. As to quaternary structure, homodimer.

It localises to the cytoplasm. It catalyses the reaction D-glyceraldehyde 3-phosphate = dihydroxyacetone phosphate. It participates in carbohydrate biosynthesis; gluconeogenesis. The protein operates within carbohydrate degradation; glycolysis; D-glyceraldehyde 3-phosphate from glycerone phosphate: step 1/1. Involved in the gluconeogenesis. Catalyzes stereospecifically the conversion of dihydroxyacetone phosphate (DHAP) to D-glyceraldehyde-3-phosphate (G3P). The chain is Triosephosphate isomerase from Magnetococcus marinus (strain ATCC BAA-1437 / JCM 17883 / MC-1).